Reading from the N-terminus, the 369-residue chain is P2X receptor B (369 aa).

The Cytoplasmic segment spans residues 1–25 (MTIDWDSILSYNTIKVVRIRDRRLG). Residues 26–46 (ILHLCFLIVIVLYVVVYSAII) traverse the membrane as a helical segment. Residues 47 to 369 (KKGYVTTEEP…DKLYHNIEAL (323 aa)) lie on the Lumenal side of the membrane. A pore-forming motif region spans residues 283 to 296 (RHAIRLIFIQTGVI).

It belongs to the P2X receptor family.

Its subcellular location is the contractile vacuole membrane. Functionally, P2X receptors are ATP-gated ion channels that play a role in intracellular calcium signaling. Not required for the purinergic response to extracellular nucleotides. Not essential for osmoregulation. Inward currents are evoked by intracellular ATP and ATP analogs. Insensitive to the P2 receptor antagonists PPADS and suramin, and also copper ions. Inhibited by sodium ions. Permeable to chloride ions. The protein is P2X receptor B (p2xB) of Dictyostelium discoideum (Social amoeba).